A 665-amino-acid polypeptide reads, in one-letter code: Filensin (665 aa).

The interval 1-40 (MYRRSYVFQTRKEQYEHADEASRAAEPERPADEGWAGATS) is head. Position 5 is a phosphoserine (S5). In terms of domain architecture, IF rod spans 40-320 (SLAALQGLGE…RIIEIEGNRL (281 aa)). The interval 41 to 75 (LAALQGLGERVAAHVQRARALEQRHAGLRRQLDAF) is coil 1A. A42 is modified (N-acetylalanine). The linker 1 stretch occupies residues 76–84 (QRLGELAGP). Positions 85–184 (EDALARQVES…RHKKNLLEVQ (100 aa)) are coil 1B. Residues 185–201 (TYISILQQIIHTTPPAS) are linker 12. The interval 202–320 (IVTSGMREEK…RIIEIEGNRL (119 aa)) is coil 2. Positions 321–665 (TSAFIETPIP…DKKKSGEKSS (345 aa)) are tail. S341 and S420 each carry phosphoserine. 2 disordered regions span residues 410–439 (SKFE…QISK) and 506–614 (YDGQ…KGPP). G434 carries N-myristoyl glycine lipidation. Position 513 is a phosphoserine (S513). Basic and acidic residues predominate over residues 556–571 (PEEKREGEERDEESRR). S665 carries the post-translational modification Phosphoserine.

It belongs to the intermediate filament family. In terms of assembly, part of a complex required for lens intermediate filament formation composed of BFSP1, BFSP2 and CRYAA. Identified in a complex that contains VIM, EZR, AHNAK, BFSP1, BFSP2, ANK2, PLEC, PRX and spectrin. Found in a complex composed of PPL (via C-terminal linker domain), BFSP1 and BFSP2 in the retinal lens. Within the complex interacts with BFSP2. Interacts (via C-terminus) with MIP (via C-terminus) in aged lens fiber cells. Proteolytically cleaved during lens cell fiber differentiation with increased fragmentation as fiber cell age increases. In terms of processing, myristoylated at Gly-434 following proteolytic cleavage at Asp-433. Post-translationally, acetylated at Ala-42 following proteolytic cleavage at Leu-41. Expressed in the cortex and nucleus of the retina lens (at protein level).

It localises to the cell membrane. The protein localises to the cytoplasm. Its subcellular location is the cytoskeleton. The protein resides in the cell cortex. Required for the correct formation of lens intermediate filaments as part of a complex composed of BFSP1, BFSP2 and CRYAA. Involved in altering the calcium regulation of MIP water permeability. This chain is Filensin (BFSP1), found in Homo sapiens (Human).